Reading from the N-terminus, the 362-residue chain is Serine/threonine-protein phosphatase 2A activator 1 (362 aa).

The segment covering M1 to P10 has biased composition (pro residues). 2 disordered regions span residues M1 to R28 and N339 to R362. Residues V340 to G351 are compositionally biased toward basic and acidic residues.

The protein belongs to the PTPA-type PPIase family.

Its subcellular location is the cytoplasm. It localises to the nucleus. The enzyme catalyses [protein]-peptidylproline (omega=180) = [protein]-peptidylproline (omega=0). Functionally, PPIases accelerate the folding of proteins. It catalyzes the cis-trans isomerization of proline imidic peptide bonds in oligopeptides. Acts as a regulatory subunit for PP2A-like phosphatases modulating their activity or substrate specificity, probably by inducing a conformational change in the catalytic subunit, a direct target of the PPIase. Can reactivate inactive phosphatase PP2A-phosphatase methylesterase complexes (PP2Ai) in presence of ATP and Mg(2+) by dissociating the inactive form from the complex. This Cryptococcus neoformans var. neoformans serotype D (strain B-3501A) (Filobasidiella neoformans) protein is Serine/threonine-protein phosphatase 2A activator 1 (RRD1).